The primary structure comprises 286 residues: 4-hydroxybenzoate octaprenyltransferase (286 aa).

7 helical membrane passes run 21–40 (GTLLLLWPCLMALVLAAGGM), 96–116 (LFVILGLAAFGLVLLLNGLVV), 142–162 (FLGVVWSWSIPMAYAAQTGEV), 167–187 (WWLFAANWFWTVAYDTMYAMV), 210–230 (QIIGLFQLAALLCFIAAGWSA), 235–255 (LYGLGLLTFVGFSTYQQMLIF), and 266–286 (FLNNNWAGLALFVGLGADYLF).

It belongs to the UbiA prenyltransferase family. Requires Mg(2+) as cofactor.

It localises to the cell inner membrane. The enzyme catalyses all-trans-octaprenyl diphosphate + 4-hydroxybenzoate = 4-hydroxy-3-(all-trans-octaprenyl)benzoate + diphosphate. Its pathway is cofactor biosynthesis; ubiquinone biosynthesis. Functionally, catalyzes the prenylation of para-hydroxybenzoate (PHB) with an all-trans polyprenyl group. Mediates the second step in the final reaction sequence of ubiquinone-8 (UQ-8) biosynthesis, which is the condensation of the polyisoprenoid side chain with PHB, generating the first membrane-bound Q intermediate 3-octaprenyl-4-hydroxybenzoate. The sequence is that of 4-hydroxybenzoate octaprenyltransferase from Shewanella sp. (strain ANA-3).